The sequence spans 202 residues: Small ribosomal subunit protein uS4c (202 aa).

Over residues 1–13 (MSRYRGPRMKMIR) the composition is skewed to basic residues. The disordered stretch occupies residues 1–41 (MSRYRGPRMKMIRRPGTLPGLTSKTPGTKVGSSDRSTSSKK). The span at 29–41 (KVGSSDRSTSSKK) shows a compositional bias: low complexity. Residues 90–153 (MRLDNTIFRL…KCRLVDRRDM (64 aa)) enclose the S4 RNA-binding domain.

The protein belongs to the universal ribosomal protein uS4 family. Part of the 30S ribosomal subunit. Contacts protein S5. The interaction surface between S4 and S5 is involved in control of translational fidelity.

Its subcellular location is the plastid. One of the primary rRNA binding proteins, it binds directly to 16S rRNA where it nucleates assembly of the body of the 30S subunit. Its function is as follows. With S5 and S12 plays an important role in translational accuracy. This is Small ribosomal subunit protein uS4c (rps4) from Aneura mirabilis (Parasitic liverwort).